A 382-amino-acid chain; its full sequence is ATP phosphoribosyltransferase regulatory subunit (382 aa).

It belongs to the class-II aminoacyl-tRNA synthetase family. HisZ subfamily. In terms of assembly, heteromultimer composed of HisG and HisZ subunits.

It is found in the cytoplasm. It functions in the pathway amino-acid biosynthesis; L-histidine biosynthesis; L-histidine from 5-phospho-alpha-D-ribose 1-diphosphate: step 1/9. In terms of biological role, required for the first step of histidine biosynthesis. May allow the feedback regulation of ATP phosphoribosyltransferase activity by histidine. The protein is ATP phosphoribosyltransferase regulatory subunit of Burkholderia pseudomallei (strain 1106a).